The following is a 269-amino-acid chain: Tryptophan synthase alpha chain (269 aa).

Active-site proton acceptor residues include glutamate 49 and aspartate 60.

The protein belongs to the TrpA family. In terms of assembly, tetramer of two alpha and two beta chains.

The catalysed reaction is (1S,2R)-1-C-(indol-3-yl)glycerol 3-phosphate + L-serine = D-glyceraldehyde 3-phosphate + L-tryptophan + H2O. It participates in amino-acid biosynthesis; L-tryptophan biosynthesis; L-tryptophan from chorismate: step 5/5. Functionally, the alpha subunit is responsible for the aldol cleavage of indoleglycerol phosphate to indole and glyceraldehyde 3-phosphate. The chain is Tryptophan synthase alpha chain from Paramagnetospirillum magneticum (strain ATCC 700264 / AMB-1) (Magnetospirillum magneticum).